We begin with the raw amino-acid sequence, 234 residues long: Probable chemoreceptor glutamine deamidase CheD 1 (234 aa).

It belongs to the CheD family.

It catalyses the reaction L-glutaminyl-[protein] + H2O = L-glutamyl-[protein] + NH4(+). Functionally, probably deamidates glutamine residues to glutamate on methyl-accepting chemotaxis receptors (MCPs), playing an important role in chemotaxis. In Albidiferax ferrireducens (strain ATCC BAA-621 / DSM 15236 / T118) (Rhodoferax ferrireducens), this protein is Probable chemoreceptor glutamine deamidase CheD 1.